Consider the following 831-residue polypeptide: MDPFEFLECSICSEEVIDFAAIFSSNKKFGDKACKHNFCVSCLTYLMEYNTRNKKALCCPICREEFDGFIQNKTSSDLLKQARKLSSAQIFLKNENSKLNEEINLIKNERENEAIQYRDRIKQLEDSKSKQVQESTNIKSRIKEMENEIQSLEQARLLDLQNNQSKFDTQQQQILTLTQSYRESQSNYNDSNLRANELNNQIQKLYREIEGFKQHAQQQDNYIKDIDSEKQLLQQQLSTIEQSYDRKQSDLLNNTRLKDLQIAKLSDANQQLGTSLSKIEAECEHFKKLYKEIQEDANGGYQKNKNLESAIASLNIELSRSKSVIDSLNTNKRTLEKELEEMKLLYQFGRGTSISSSIAPPTIINTANKITNSSYNLINNSIGYFMGSKNYLNDITKPYKGFKIEEKRGNKTSQIHKVSIGNGCGHFVIKLIPTVSGTNVGNSYSKFIYNSIYSSTLAESEILLFREAMLLYKLNHNNILKLESITKDESSGKYYSVLSPFVPKDLEFILAENSQNFGGLGKISPTTLTFSDIKYIVYQLISVVHYLHTQDLVHRDLKPTSILLFDDYQIKLCSFGNAISVFTNFGNSITQPTYSNPSSYSYLSPEYICSVLDKENHSKLSNEIDWKAFDMWSIGCIFLELIYKKKLFNNLNLDNNNNNNNNNNNNNNNNNNNNNNNNNNNNNNNNNNNNNNNNNNNIESNFNNVNNSQQQQLYSVLNNISTYKESAPKNGNLYFKENHNIIIKSKVERDFNGANLPTDAYNLLCALLSFNPTTRIKANQAAFHKFFKDEPYYIHDSASVSPNKLEDLSSLLTDRNIKQFLKEKCSNLIQV.

The RING-type zinc finger occupies 9-63; it reads CSICSEEVIDFAAIFSSNKKFGDKACKHNFCVSCLTYLMEYNTRNKKALCCPICR. Positions 83-348 form a coiled coil; the sequence is RKLSSAQIFL…LEEMKLLYQF (266 aa). In terms of domain architecture, Protein kinase spans 414–787; that stretch reads QIHKVSIGNG…ANQAAFHKFF (374 aa). The disordered stretch occupies residues 657–703; that stretch reads NNNNNNNNNNNNNNNNNNNNNNNNNNNNNNNNNNNNNNNNNIESNFN.

Belongs to the protein kinase superfamily. CMGC Ser/Thr protein kinase family.

This Dictyostelium discoideum (Social amoeba) protein is Probable inactive serine/threonine-protein kinase DDB_G0274613.